We begin with the raw amino-acid sequence, 282 residues long: Aldo-keto reductase ML1669 (282 aa).

Tyr-57 (proton donor) is an active-site residue. Residues Leu-197, Val-235, Arg-237, Ser-238, Ala-239, Ser-246, Asn-247, and Arg-273 each coordinate NADPH.

It belongs to the aldo/keto reductase family.

This Mycobacterium leprae (strain TN) protein is Aldo-keto reductase ML1669.